Here is a 245-residue protein sequence, read N- to C-terminus: Probable phosphatase YcdX (245 aa).

Residues His7, His9, His15, His40, Glu73, His101, His131, Asp192, and His194 each contribute to the Zn(2+) site.

Belongs to the PHP family. As to quaternary structure, homotrimer. Zn(2+) is required as a cofactor.

The protein is Probable phosphatase YcdX of Escherichia coli (strain K12 / MC4100 / BW2952).